The following is a 322-amino-acid chain: tRNA-dihydrouridine synthase B (322 aa).

Residues 16-18 and Q70 contribute to the FMN site; that span reads PMA. C100 acts as the Proton donor in catalysis. FMN is bound by residues K139, 200–202, and 224–225; these read NGD and GR.

Belongs to the Dus family. DusB subfamily. FMN is required as a cofactor.

It carries out the reaction a 5,6-dihydrouridine in tRNA + NAD(+) = a uridine in tRNA + NADH + H(+). The enzyme catalyses a 5,6-dihydrouridine in tRNA + NADP(+) = a uridine in tRNA + NADPH + H(+). Its function is as follows. Catalyzes the synthesis of 5,6-dihydrouridine (D), a modified base found in the D-loop of most tRNAs, via the reduction of the C5-C6 double bond in target uridines. This chain is tRNA-dihydrouridine synthase B, found in Vibrio parahaemolyticus serotype O3:K6 (strain RIMD 2210633).